The sequence spans 195 residues: ATP-dependent Clp protease proteolytic subunit 2 (195 aa).

The active-site Nucleophile is S98. The active site involves H123.

It belongs to the peptidase S14 family. In terms of assembly, fourteen ClpP subunits assemble into 2 heptameric rings which stack back to back to give a disk-like structure with a central cavity, resembling the structure of eukaryotic proteasomes.

The protein resides in the cytoplasm. It catalyses the reaction Hydrolysis of proteins to small peptides in the presence of ATP and magnesium. alpha-casein is the usual test substrate. In the absence of ATP, only oligopeptides shorter than five residues are hydrolyzed (such as succinyl-Leu-Tyr-|-NHMec, and Leu-Tyr-Leu-|-Tyr-Trp, in which cleavage of the -Tyr-|-Leu- and -Tyr-|-Trp bonds also occurs).. Functionally, cleaves peptides in various proteins in a process that requires ATP hydrolysis. Has a chymotrypsin-like activity. Plays a major role in the degradation of misfolded proteins. ClpXP2 is involved in the complete degradation of the Site-2 clipped anti-sigma-W factor RsiW. This results in the release of SigW and the transcription activation of the genes under the control of the sigma-W factor. The chain is ATP-dependent Clp protease proteolytic subunit 2 from Shouchella clausii (strain KSM-K16) (Alkalihalobacillus clausii).